A 65-amino-acid polypeptide reads, in one-letter code: Large ribosomal subunit protein bL35 (65 aa).

Basic residues predominate over residues 1 to 11; the sequence is MPKIKTRRSAA. The segment at 1–25 is disordered; sequence MPKIKTRRSAAKRFSVTGSGKFRRR.

The protein belongs to the bacterial ribosomal protein bL35 family.

The polypeptide is Large ribosomal subunit protein bL35 (Nitratidesulfovibrio vulgaris (strain ATCC 29579 / DSM 644 / CCUG 34227 / NCIMB 8303 / VKM B-1760 / Hildenborough) (Desulfovibrio vulgaris)).